A 409-amino-acid chain; its full sequence is MSTNSSIKKVVLAYSGGLDTSVIVKWLQETYNCEVVTFTADIGQGEEVEPARAKAEALGVKEIYIDDLREEFVRDYVFPMFRANTIYEGEYLLGTSIARPLIAKRLIEIANETGADAISHGATGKGNDQVRFELGAYALKPGIHVIAPWRDWDLTSRETLMDYCAKHNIPVDYTKAKKKSPYSMDANLLHISYEGGILEDPWAEAEEDMWRWSVSPEAAPDQPEYLELTFKHGDIVAIDGVEMSPATVLETLNKRGGAHGVGRLDIVENRYVGMKSRGCYETPGGTIILRAHRAIESITLDREVAHLKDSLMPKYAEMIYNGYWWSPERQMLQTAIDNSQGPVNGDVRVKLYKGSVTVVGRRSNDSLFDEKIATFEDDAGAYNQKDAEGFIKLNALRMRIAAQKGRKLL.

ATP is bound by residues Ala13–Ser21 and Ala40. 2 residues coordinate L-citrulline: Tyr91 and Ser96. Gly121 provides a ligand contact to ATP. Residues Thr123, Asn127, and Asp128 each coordinate L-aspartate. Asn127 is an L-citrulline binding site. L-citrulline contacts are provided by Arg131, Ser183, Ser192, Glu268, and Tyr280.

This sequence belongs to the argininosuccinate synthase family. Type 1 subfamily. In terms of assembly, homotetramer.

Its subcellular location is the cytoplasm. The catalysed reaction is L-citrulline + L-aspartate + ATP = 2-(N(omega)-L-arginino)succinate + AMP + diphosphate + H(+). It participates in amino-acid biosynthesis; L-arginine biosynthesis; L-arginine from L-ornithine and carbamoyl phosphate: step 2/3. The protein is Argininosuccinate synthase of Saccharophagus degradans (strain 2-40 / ATCC 43961 / DSM 17024).